The following is a 211-amino-acid chain: Lipoprotein signal peptidase (211 aa).

3 helical membrane-spanning segments follow: residues 12 to 32 (LLAL…YLAV), 96 to 116 (AFRN…ILHY), and 127 to 147 (LQVA…DRLA). Catalysis depends on residues Asp153 and Asp174. Residues 167–187 (WPTFNIADSLIVVGVALLVLH) form a helical membrane-spanning segment.

This sequence belongs to the peptidase A8 family.

The protein resides in the cell inner membrane. It catalyses the reaction Release of signal peptides from bacterial membrane prolipoproteins. Hydrolyzes -Xaa-Yaa-Zaa-|-(S,diacylglyceryl)Cys-, in which Xaa is hydrophobic (preferably Leu), and Yaa (Ala or Ser) and Zaa (Gly or Ala) have small, neutral side chains.. It participates in protein modification; lipoprotein biosynthesis (signal peptide cleavage). In terms of biological role, this protein specifically catalyzes the removal of signal peptides from prolipoproteins. This is Lipoprotein signal peptidase from Anaeromyxobacter sp. (strain Fw109-5).